Consider the following 357-residue polypeptide: Glutamine synthetase root isozyme B (357 aa).

The GS beta-grasp domain occupies 19-99 (IIAEYIWVGG…VICDVYTPAG (81 aa)). Positions 106 to 357 (KRYNAAKIFS…AETTILWKKS (252 aa)) constitute a GS catalytic domain.

It belongs to the glutamine synthetase family. Homooctamer.

It is found in the cytoplasm. It carries out the reaction L-glutamate + NH4(+) + ATP = L-glutamine + ADP + phosphate + H(+). In Pisum sativum (Garden pea), this protein is Glutamine synthetase root isozyme B (GS3B).